A 474-amino-acid polypeptide reads, in one-letter code: tRNA modification GTPase MnmE (474 aa).

3 residues coordinate (6S)-5-formyl-5,6,7,8-tetrahydrofolate: Arg-28, Glu-92, and Arg-131. The region spanning 227–395 (GIPVAIVGTT…LKGELTQIME (169 aa)) is the TrmE-type G domain. A K(+)-binding site is contributed by Asn-237. Residues 237–242 (NVGKST), 256–262 (SDIHGTT), 281–284 (DTAG), and 376–378 (SAR) contribute to the GTP site. Residue Ser-241 coordinates Mg(2+). Residues Ser-256, Ile-258, and Thr-261 each contribute to the K(+) site. Thr-262 is a binding site for Mg(2+). Lys-474 serves as a coordination point for (6S)-5-formyl-5,6,7,8-tetrahydrofolate.

It belongs to the TRAFAC class TrmE-Era-EngA-EngB-Septin-like GTPase superfamily. TrmE GTPase family. Homodimer. Heterotetramer of two MnmE and two MnmG subunits. It depends on K(+) as a cofactor.

The protein localises to the cytoplasm. Its function is as follows. Exhibits a very high intrinsic GTPase hydrolysis rate. Involved in the addition of a carboxymethylaminomethyl (cmnm) group at the wobble position (U34) of certain tRNAs, forming tRNA-cmnm(5)s(2)U34. In Porphyromonas gingivalis (strain ATCC BAA-308 / W83), this protein is tRNA modification GTPase MnmE.